Here is a 135-residue protein sequence, read N- to C-terminus: Small ribosomal subunit protein uS8 (135 aa).

Belongs to the universal ribosomal protein uS8 family. In terms of assembly, part of the 30S ribosomal subunit. Contacts proteins S5 and S12.

Its function is as follows. One of the primary rRNA binding proteins, it binds directly to 16S rRNA central domain where it helps coordinate assembly of the platform of the 30S subunit. The protein is Small ribosomal subunit protein uS8 of Corynebacterium urealyticum (strain ATCC 43042 / DSM 7109).